Consider the following 467-residue polypeptide: ATP-dependent protease ATPase subunit HslU (467 aa).

ATP is bound by residues Ile20, 62-67 (GVGKTE), Asp280, Glu345, and Arg417.

The protein belongs to the ClpX chaperone family. HslU subfamily. As to quaternary structure, a double ring-shaped homohexamer of HslV is capped on each side by a ring-shaped HslU homohexamer. The assembly of the HslU/HslV complex is dependent on binding of ATP.

Its subcellular location is the cytoplasm. In terms of biological role, ATPase subunit of a proteasome-like degradation complex; this subunit has chaperone activity. The binding of ATP and its subsequent hydrolysis by HslU are essential for unfolding of protein substrates subsequently hydrolyzed by HslV. HslU recognizes the N-terminal part of its protein substrates and unfolds these before they are guided to HslV for hydrolysis. This Ligilactobacillus salivarius (strain UCC118) (Lactobacillus salivarius) protein is ATP-dependent protease ATPase subunit HslU.